The sequence spans 126 residues: Aspartate 1-decarboxylase (126 aa).

Serine 25 acts as the Schiff-base intermediate with substrate; via pyruvic acid in catalysis. A Pyruvic acid (Ser) modification is found at serine 25. Threonine 57 contributes to the substrate binding site. Catalysis depends on tyrosine 58, which acts as the Proton donor. 73 to 75 contributes to the substrate binding site; sequence GGA.

This sequence belongs to the PanD family. Heterooctamer of four alpha and four beta subunits. The cofactor is pyruvate. Post-translationally, is synthesized initially as an inactive proenzyme, which is activated by self-cleavage at a specific serine bond to produce a beta-subunit with a hydroxyl group at its C-terminus and an alpha-subunit with a pyruvoyl group at its N-terminus.

Its subcellular location is the cytoplasm. The catalysed reaction is L-aspartate + H(+) = beta-alanine + CO2. It functions in the pathway cofactor biosynthesis; (R)-pantothenate biosynthesis; beta-alanine from L-aspartate: step 1/1. Functionally, catalyzes the pyruvoyl-dependent decarboxylation of aspartate to produce beta-alanine. The polypeptide is Aspartate 1-decarboxylase (Acinetobacter baumannii (strain AB307-0294)).